Reading from the N-terminus, the 862-residue chain is Protein argonaute-2 (862 aa).

In terms of domain architecture, PAZ spans 232–351 (PVIEFMCEVL…LPLEVCNIVA (120 aa)). 2 interaction with guide RNA regions span residues 314 to 319 (YFKDRH) and 527 to 569 (GKTP…LCLK). One can recognise a Piwi domain in the interval 520-821 (LVVVILPGKT…VAFRARYHLV (302 aa)). Residues 590–593 (FQQP) form an interaction with GW182 family members region. Asp-600 is an a divalent metal cation binding site. The segment at 653–663 (LIQFYKSTRFK) is interaction with GW182 family members. Residue Asp-672 participates in a divalent metal cation binding. Interaction with guide RNA regions lie at residues 712–713 (KR), 756–764 (HAGIQGTSR), and 793–815 (YVRC…VAFR). His-810 serves as a coordination point for a divalent metal cation. Residues 825–847 (HDSAEGSHTSGQSNGRDQQALAK) form a disordered region. Residues 830 to 841 (GSHTSGQSNGRD) show a composition bias toward polar residues.

The protein belongs to the argonaute family. Ago subfamily. Component of the RISC loading complex (RLC), or micro-RNA (miRNA) loading complex (miRLC), which is composed of dicer1, ago2 and tarbp2. Note that the trimeric RLC/miRLC is also referred to as RISC. Requires Mg(2+) as cofactor. Mn(2+) serves as cofactor.

It localises to the cytoplasm. Its subcellular location is the P-body. The catalysed reaction is Endonucleolytic cleavage to 5'-phosphomonoester.. Functionally, required for RNA-mediated gene silencing (RNAi) by the RNA-induced silencing complex (RISC). The 'minimal RISC' appears to include ago2 bound to a short guide RNA such as a microRNA (miRNA) or short interfering RNA (siRNA). These guide RNAs direct RISC to complementary mRNAs that are targets for RISC-mediated gene silencing. The precise mechanism of gene silencing depends on the degree of complementarity between the miRNA or siRNA and its target. Binding of RISC to a perfectly complementary mRNA generally results in silencing due to endonucleolytic cleavage of the mRNA specifically by ago2. Binding of RISC to a partially complementary mRNA results in silencing through inhibition of translation, and this is independent of endonuclease activity. The inhibition of translational initiation leads to the accumulation of the affected mRNA in cytoplasmic processing bodies (P-bodies), where mRNA degradation may subsequently occur. This is Protein argonaute-2 (ago2) from Xenopus laevis (African clawed frog).